The sequence spans 151 residues: Flavodoxin YqcA (151 aa).

Residues 4–145 enclose the Flavodoxin-like domain; sequence IGIFVGTVYG…ISCPWVEAWA (142 aa). FMN-binding positions include 10–15 and 99–101; these read TVYGNA and NFC.

This sequence belongs to the flavodoxin family. MioC subfamily. Monomer. FMN is required as a cofactor.

Probable electron transporter. The chain is Flavodoxin YqcA from Pectobacterium carotovorum subsp. carotovorum (Erwinia carotovora subsp. carotovora).